A 415-amino-acid polypeptide reads, in one-letter code: MHPVLRQMRPPPQQRQEQEQRQTCRAPSPPPTASGGATSAVDAAADGDYEPPRRRARHYLDLEEGEGLARLGAPSPERYPRVQLKRDTREAYVPRQNLFRDREGEEPEEMRDRKFHAGRELRHGLNRERLLREEDFEPDARTGISPARAHVAAADLVTAYEQTVNQEINFQKSFNNHVRTLVAREEVAIGLMHLWDFVSALEQNPNSKPLMAQLFLIVQHSRDNEAFRDALLNIVEPEGRWLLDLINILQSIVVQERSLSLADKVAAINYSMLSLGKFYARKIYHTPYVPIDKEVKIEGFYMRMALKVLTLSDDLGVYRNERIHKAVSVSRRRELSDRELMHSLQRALAGTGSGDREAESYFDAGADLRWAPSRRALEAAGAGPGLAVAPARAGNVGGVEEYDEDDEYEPEDGEY.

The segment at 1-55 is disordered; the sequence is MHPVLRQMRPPPQQRQEQEQRQTCRAPSPPPTASGGATSAVDAAADGDYEPPRRR. An interaction with packaging protein 1 region spans residues 1-173; it reads MHPVLRQMRP…VNQEINFQKS (173 aa). 2 positions are modified to phosphoserine; by host: serine 75 and serine 360. Residues 381-394 show a composition bias toward low complexity; sequence GAGPGLAVAPARAG. Residues 381–415 are disordered; that stretch reads GAGPGLAVAPARAGNVGGVEEYDEDDEYEPEDGEY. Residues 400 to 415 are compositionally biased toward acidic residues; sequence EEYDEDDEYEPEDGEY.

It belongs to the adenoviridae packaging protein 3 family. In terms of assembly, part of the genome packaging complex composed of packaging proteins 1, 2 and 3; this complex specifically binds to the packaging sequence on the left end of viral genomic DNA and performs packaging of the viral genome. Interacts with hexon-linking protein IIIa; this interaction is required to promote correct genome packaging. Post-translationally, cleaved at different sites by the viral protease during virion maturation.

It is found in the host nucleus. Its function is as follows. Involved in viral genome packaging through its interaction with packaging proteins 1 and 2. After proteolytic cleavage by adenovirus protease, L1 52/55k protein is removed from the capsid during viral maturation. This chain is Packaging protein 3, found in Homo sapiens (Human).